The sequence spans 558 residues: Scarecrow-like protein 6 (558 aa).

The interval 19 to 90 (FSSSFPQPPS…GGDATTDEQC (72 aa)) is disordered. Residues 54-75 (SVLDSLISPTSSSTVSSSHGGN) are compositionally biased toward low complexity. The 359-residue stretch at 196–554 (KRLNPGPVGI…TELVGVSAWR (359 aa)) folds into the GRAS domain. A leucine repeat I (LRI) region spans residues 203–257 (VGITEQLVKAAEVIESDTCLAQGILARLNQQLSSPVGKPLERAAFYFKEALNNLL). The tract at residues 276–340 (YKSFSEISPV…DNAAPLSLKI (65 aa)) is VHIID. The VHIID motif lies at 307-311 (LHIID). The segment at 356–388 (FTQDNLKHFASEINISLDIQVLSLDLLGSISWP) is leucine repeat II (LRII). Residues 396–479 (VAVNISAASF…RFLIQPEIEK (84 aa)) are PFYRE. Residues 482-554 (LDRSRPIERP…TELVGVSAWR (73 aa)) form an SAW region.

Belongs to the GRAS family. Interacts with Meloidogyne incognita 16D10. As to expression, expressed in seedlings, roots, leaves, flowers and siliques.

It is found in the nucleus. In terms of biological role, probable transcription factor involved in plant development. This Arabidopsis thaliana (Mouse-ear cress) protein is Scarecrow-like protein 6 (SCL6).